Consider the following 202-residue polypeptide: Snake venom metalloproteinase TM-1 (202 aa).

Q1 carries the post-translational modification Pyrrolidone carboxylic acid. Residues 7 to 202 (RYVMLAIVAD…TNPQCILNAP (196 aa)) enclose the Peptidase M12B domain. 3 disulfides stabilise this stretch: C118-C197, C159-C181, and C161-C164. H143 lines the Zn(2+) pocket. E144 is an active-site residue. Zn(2+) contacts are provided by H147 and H153.

Belongs to the venom metalloproteinase (M12B) family. P-I subfamily. Monomer. Zn(2+) serves as cofactor. In terms of processing, the N-terminus is blocked. Post-translationally, not glycosylated. In terms of tissue distribution, expressed by the venom gland.

Its subcellular location is the secreted. Inhibited by EDTA and 1,10-phenanthroline. Is also inhibited by endogenous tripeptide inhibitors pyroGlu-Asn-Trp, pyroGlu-Gln-Trp, and pyroGlu-Lys-Trp. Potent fibrinogenolytic protease which cleaves mainly the Aalpha (FGA) and Bbeta (FGB) chains of fibrinogen and slightly the gamma chain (FGG). Shows preference for substrates having a moderate-size and hydrophobic residue at the P1' position. Preferentially cleaves Ala-|-Leu and Tyr-|-Leu bonds. Is more susceptible to tripeptide inhibitors than TM-3 (AC O57413). This chain is Snake venom metalloproteinase TM-1, found in Protobothrops mucrosquamatus (Taiwan habu).